The chain runs to 196 residues: Proteasome subunit beta 1 (196 aa).

Positions 1-6 are cleaved as a propeptide — removed in mature form; by autocatalysis; that stretch reads MEKKTG. The active-site Nucleophile is the threonine 7.

This sequence belongs to the peptidase T1B family. The 20S proteasome core is composed of 14 alpha and 14 beta subunits that assemble into four stacked heptameric rings, resulting in a barrel-shaped structure. The two inner rings, each composed of seven catalytic beta subunits, are sandwiched by two outer rings, each composed of seven alpha subunits. The catalytic chamber with the active sites is on the inside of the barrel. Has a gated structure, the ends of the cylinder being occluded by the N-termini of the alpha-subunits. Is capped at one or both ends by the proteasome regulatory ATPase, PAN.

The protein localises to the cytoplasm. It catalyses the reaction Cleavage of peptide bonds with very broad specificity.. The formation of the proteasomal ATPase PAN-20S proteasome complex, via the docking of the C-termini of PAN into the intersubunit pockets in the alpha-rings, triggers opening of the gate for substrate entry. Interconversion between the open-gate and close-gate conformations leads to a dynamic regulation of the 20S proteasome proteolysis activity. In terms of biological role, component of the proteasome core, a large protease complex with broad specificity involved in protein degradation. This chain is Proteasome subunit beta 1, found in Pyrococcus furiosus (strain ATCC 43587 / DSM 3638 / JCM 8422 / Vc1).